The chain runs to 302 residues: 5'-3' exonuclease (302 aa).

Residues 173–269 enclose the 5'-3' exonuclease domain; the sequence is IPKLIPDLLG…NITTKKIKML (97 aa).

Functionally, 5'-3' exonuclease acting preferentially on double-stranded DNA. The polypeptide is 5'-3' exonuclease (pol) (Buchnera aphidicola subsp. Baizongia pistaciae (strain Bp)).